The following is a 339-amino-acid chain: Ketol-acid reductoisomerase (NADP(+)) (339 aa).

Residues 1–182 (MPNRYYEKDG…GCLKAGVIDT (182 aa)) enclose the KARI N-terminal Rossmann domain. NADP(+) contacts are provided by residues 25–28 (YGSQ), Ser-51, Ser-53, and 83–86 (DHIQ). The active site involves His-108. Gly-134 contacts NADP(+). In terms of domain architecture, KARI C-terminal knotted spans 183–328 (NFREETESDL…RELREMMTFL (146 aa)). Residues Asp-191, Glu-195, Glu-227, and Glu-231 each coordinate Mg(2+). Ser-252 lines the substrate pocket.

The protein belongs to the ketol-acid reductoisomerase family. Mg(2+) serves as cofactor.

The catalysed reaction is (2R)-2,3-dihydroxy-3-methylbutanoate + NADP(+) = (2S)-2-acetolactate + NADPH + H(+). The enzyme catalyses (2R,3R)-2,3-dihydroxy-3-methylpentanoate + NADP(+) = (S)-2-ethyl-2-hydroxy-3-oxobutanoate + NADPH + H(+). It functions in the pathway amino-acid biosynthesis; L-isoleucine biosynthesis; L-isoleucine from 2-oxobutanoate: step 2/4. The protein operates within amino-acid biosynthesis; L-valine biosynthesis; L-valine from pyruvate: step 2/4. In terms of biological role, involved in the biosynthesis of branched-chain amino acids (BCAA). Catalyzes an alkyl-migration followed by a ketol-acid reduction of (S)-2-acetolactate (S2AL) to yield (R)-2,3-dihydroxy-isovalerate. In the isomerase reaction, S2AL is rearranged via a Mg-dependent methyl migration to produce 3-hydroxy-3-methyl-2-ketobutyrate (HMKB). In the reductase reaction, this 2-ketoacid undergoes a metal-dependent reduction by NADPH to yield (R)-2,3-dihydroxy-isovalerate. The sequence is that of Ketol-acid reductoisomerase (NADP(+)) from Solibacter usitatus (strain Ellin6076).